The primary structure comprises 192 residues: dTTP/UTP pyrophosphatase (192 aa).

Residue Asp75 is the Proton acceptor of the active site.

The protein belongs to the Maf family. YhdE subfamily. It depends on a divalent metal cation as a cofactor.

The protein resides in the cytoplasm. The catalysed reaction is dTTP + H2O = dTMP + diphosphate + H(+). The enzyme catalyses UTP + H2O = UMP + diphosphate + H(+). Functionally, nucleoside triphosphate pyrophosphatase that hydrolyzes dTTP and UTP. May have a dual role in cell division arrest and in preventing the incorporation of modified nucleotides into cellular nucleic acids. The chain is dTTP/UTP pyrophosphatase from Pelodictyon phaeoclathratiforme (strain DSM 5477 / BU-1).